The chain runs to 460 residues: tRNA modification GTPase MnmE (460 aa).

3 residues coordinate (6S)-5-formyl-5,6,7,8-tetrahydrofolate: Arg29, Glu91, and Lys132. The 157-residue stretch at 227–383 (GISIALIGKT…LIDTIIKKCG (157 aa)) folds into the TrmE-type G domain. Asn237 is a K(+) binding site. Residues 237–242 (NVGKSS), 256–262 (TNIPGTT), and 281–284 (DTAG) each bind GTP. Ser241 contacts Mg(2+). Residues Thr256, Ile258, and Thr261 each coordinate K(+). Thr262 lines the Mg(2+) pocket. Position 460 (Lys460) interacts with (6S)-5-formyl-5,6,7,8-tetrahydrofolate.

Belongs to the TRAFAC class TrmE-Era-EngA-EngB-Septin-like GTPase superfamily. TrmE GTPase family. Homodimer. Heterotetramer of two MnmE and two MnmG subunits. It depends on K(+) as a cofactor.

Its subcellular location is the cytoplasm. In terms of biological role, exhibits a very high intrinsic GTPase hydrolysis rate. Involved in the addition of a carboxymethylaminomethyl (cmnm) group at the wobble position (U34) of certain tRNAs, forming tRNA-cmnm(5)s(2)U34. The protein is tRNA modification GTPase MnmE of Prochlorococcus marinus (strain MIT 9301).